A 169-amino-acid chain; its full sequence is MEGKRNHQIIHSSDLFLTLVGNSSGTSSGSFWVQVVRWLRWLQVFVQFEDQWNTSWDVQLSNVSIRDTFQVLNQTSQGVTVSGDHDGLTTQQVLGNDILPVWQQSVNDQSQRFSFWQDIWVNVLVSFITLLREWRRSVDWGRWNIEGSSVGVEFFFTELLQSFSLVLTL.

This is an uncharacterized protein from Saccharomyces cerevisiae (strain ATCC 204508 / S288c) (Baker's yeast).